The chain runs to 347 residues: 3-keto-steroid reductase ERG27 (347 aa).

Residues L15, T38, and R44 each coordinate NADP(+). Catalysis depends on proton donor residues S179 and Y202. NADP(+) is bound by residues Y202, K206, and S237. The Lowers pKa of active site Tyr role is filled by K206. T345 is subject to Phosphothreonine.

It belongs to the short-chain dehydrogenases/reductases (SDR) family. ERG27 subfamily. In terms of assembly, heterotetramer of ERG25, ERG26, ERG27 and ERG28. ERG28 acts as a scaffold to tether ERG27 and other 4,4-demethylation-related enzymes, forming a demethylation enzyme complex, in the endoplasmic reticulum. Interacts with ERG25 and ERG28. Also interacts with ERG7, but only in lipid particles.

Its subcellular location is the endoplasmic reticulum membrane. It is found in the lipid droplet. The enzyme catalyses 3-dehydro-4alpha-methylzymosterol + NADPH + H(+) = 4alpha-methylzymosterol + NADP(+). The protein operates within steroid biosynthesis; zymosterol biosynthesis; zymosterol from lanosterol: step 5/6. Functionally, 3-keto-steroid reductase; part of the third module of ergosterol biosynthesis pathway that includes the late steps of the pathway. ERG27 is a catalytic component of the C-4 demethylation complex that catalyze the reduction of the keto group on the C-3. The third module or late pathway involves the ergosterol synthesis itself through consecutive reactions that mainly occur in the endoplasmic reticulum (ER) membrane. Firstly, the squalene synthase ERG9 catalyzes the condensation of 2 farnesyl pyrophosphate moieties to form squalene, which is the precursor of all steroids. Squalene synthase is crucial for balancing the incorporation of farnesyl diphosphate (FPP) into sterol and nonsterol isoprene synthesis. Secondly, the squalene epoxidase ERG1 catalyzes the stereospecific oxidation of squalene to (S)-2,3-epoxysqualene, which is considered to be a rate-limiting enzyme in steroid biosynthesis. Then, the lanosterol synthase ERG7 catalyzes the cyclization of (S)-2,3 oxidosqualene to lanosterol, a reaction that forms the sterol core. In the next steps, lanosterol is transformed to zymosterol through a complex process involving various demethylation, reduction and desaturation reactions. The lanosterol 14-alpha-demethylase ERG11 (also known as CYP51) catalyzes C14-demethylation of lanosterol to produce 4,4'-dimethyl cholesta-8,14,24-triene-3-beta-ol, which is critical for ergosterol biosynthesis. The C-14 reductase ERG24 reduces the C14=C15 double bond of 4,4-dimethyl-cholesta-8,14,24-trienol to produce 4,4-dimethyl-cholesta-8,24-dienol. 4,4-dimethyl-cholesta-8,24-dienol is substrate of the C-4 demethylation complex ERG25-ERG26-ERG27 in which ERG25 catalyzes the three-step monooxygenation required for the demethylation of 4,4-dimethyl and 4alpha-methylsterols, ERG26 catalyzes the oxidative decarboxylation that results in a reduction of the 3-beta-hydroxy group at the C-3 carbon to an oxo group, and ERG27 is responsible for the reduction of the keto group on the C-3. ERG28 has a role as a scaffold to help anchor ERG25, ERG26 and ERG27 to the endoplasmic reticulum and ERG29 regulates the activity of the iron-containing C4-methylsterol oxidase ERG25. Then, the sterol 24-C-methyltransferase ERG6 catalyzes the methyl transfer from S-adenosyl-methionine to the C-24 of zymosterol to form fecosterol. The C-8 sterol isomerase ERG2 catalyzes the reaction which results in unsaturation at C-7 in the B ring of sterols and thus converts fecosterol to episterol. The sterol-C5-desaturase ERG3 then catalyzes the introduction of a C-5 double bond in the B ring to produce 5-dehydroepisterol. The C-22 sterol desaturase ERG5 further converts 5-dehydroepisterol into ergosta-5,7,22,24(28)-tetraen-3beta-ol by forming the C-22(23) double bond in the sterol side chain. Finally, ergosta-5,7,22,24(28)-tetraen-3beta-ol is substrate of the C-24(28) sterol reductase ERG4 to produce ergosterol. In terms of biological role, facilitates the association of ERG7 with lipid particles preventing its digestion in the endoplasmic reticulum and the lipid particles. This Saccharomyces cerevisiae (strain ATCC 204508 / S288c) (Baker's yeast) protein is 3-keto-steroid reductase ERG27.